A 200-amino-acid polypeptide reads, in one-letter code: Transcription elongation factor A protein-like 3 (200 aa).

Positions 1–200 (MEKPYNKNEG…QRGLHDIPYL (200 aa)) are disordered. Residues 20–36 (DEVEPDDEGKSDEEEKP) are compositionally biased toward acidic residues. At serine 30 the chain carries Phosphoserine. A compositionally biased stretch (basic and acidic residues) spans 37-50 (DVEGKTECEGKRED). A compositionally biased stretch (acidic residues) spans 51–64 (EGEPGDEGQLEDEG). Serine 65 is subject to Phosphoserine. Composition is skewed to basic and acidic residues over residues 65-80 (SQEK…KPQG), 96-107 (AAEKRPAEDYVP), and 115-154 (DRGT…EELR).

It belongs to the TFS-II family. TFA subfamily.

The protein resides in the nucleus. Its function is as follows. May be involved in transcriptional regulation. The chain is Transcription elongation factor A protein-like 3 (TCEAL3) from Homo sapiens (Human).